We begin with the raw amino-acid sequence, 117 residues long: Putative pterin-4-alpha-carbinolamine dehydratase (117 aa).

It belongs to the pterin-4-alpha-carbinolamine dehydratase family.

The catalysed reaction is (4aS,6R)-4a-hydroxy-L-erythro-5,6,7,8-tetrahydrobiopterin = (6R)-L-erythro-6,7-dihydrobiopterin + H2O. The sequence is that of Putative pterin-4-alpha-carbinolamine dehydratase from Azoarcus sp. (strain BH72).